We begin with the raw amino-acid sequence, 501 residues long: Glutamate--tRNA ligase (501 aa).

The 'HIGH' region motif lies at 11–21; that stretch reads PSPTGALHIGG. Positions 260-264 match the 'KMSKS' region motif; that stretch reads KLSKR. Lysine 263 contacts ATP.

This sequence belongs to the class-I aminoacyl-tRNA synthetase family. Glutamate--tRNA ligase type 1 subfamily. Monomer.

Its subcellular location is the cytoplasm. It carries out the reaction tRNA(Glu) + L-glutamate + ATP = L-glutamyl-tRNA(Glu) + AMP + diphosphate. In terms of biological role, catalyzes the attachment of glutamate to tRNA(Glu) in a two-step reaction: glutamate is first activated by ATP to form Glu-AMP and then transferred to the acceptor end of tRNA(Glu). The sequence is that of Glutamate--tRNA ligase from Flavobacterium psychrophilum (strain ATCC 49511 / DSM 21280 / CIP 103535 / JIP02/86).